The sequence spans 194 residues: Small ribosomal subunit protein uS7 (194 aa).

This sequence belongs to the universal ribosomal protein uS7 family. In terms of assembly, part of the 30S ribosomal subunit.

Its function is as follows. One of the primary rRNA binding proteins, it binds directly to 16S rRNA where it nucleates assembly of the head domain of the 30S subunit. Is located at the subunit interface close to the decoding center. In Archaeoglobus fulgidus (strain ATCC 49558 / DSM 4304 / JCM 9628 / NBRC 100126 / VC-16), this protein is Small ribosomal subunit protein uS7.